The following is a 65-amino-acid chain: Large ribosomal subunit protein bL35 (65 aa).

The protein belongs to the bacterial ribosomal protein bL35 family.

This Desulfitobacterium hafniense (strain DSM 10664 / DCB-2) protein is Large ribosomal subunit protein bL35.